The chain runs to 82 residues: Small ribosomal subunit protein bS16 (82 aa).

It belongs to the bacterial ribosomal protein bS16 family.

The sequence is that of Small ribosomal subunit protein bS16 from Microcystis aeruginosa (strain NIES-843 / IAM M-2473).